Consider the following 141-residue polypeptide: Small ribosomal subunit protein eS17z (141 aa).

Belongs to the eukaryotic ribosomal protein eS17 family.

The polypeptide is Small ribosomal subunit protein eS17z (RPS17A) (Arabidopsis thaliana (Mouse-ear cress)).